Consider the following 357-residue polypeptide: Solute carrier family 25 member 3 (357 aa).

The transit peptide at 1-45 (MFSSVAHLARANPFNAPHLQLVHDGLSGPRSPPAPPRRSRHLAAA) directs the protein to the mitochondrion. Topologically, residues 46-58 (AVEEYSCEFGSMK) are mitochondrial intermembrane. Solcar repeat units follow at residues 58–142 (KYYA…FKAL), 155–239 (WRTS…TVEA), and 256–334 (EQLV…VKVY). Residues 59–81 (YYALCGFGGVLSCGLTHTAVVPL) traverse the membrane as a helical segment. The Mitochondrial matrix segment spans residues 82-116 (DLVKCRMQVDPQKYKGIFNGFSITLKEDGVRGLAK). Position 94 is an N6-acetyllysine (K94). At K107 the chain carries N6-methyllysine. Residues 117-136 (GWAPTLIGYSMQGLCKFGFY) form a helical membrane-spanning segment. Topologically, residues 137-156 (EVFKALYSNILGEENTYLWR) are mitochondrial intermembrane. The chain crosses the membrane as a helical span at residues 157–178 (TSLYLASSASAEFFADIALAPM). At 179–213 (EAAKVRIQTQPGYANTLREAVPKMYKEEGLNAFYK) the chain is on the mitochondrial matrix side. Y191 carries the phosphotyrosine modification. Residue K204 is modified to N6-acetyllysine. A helical membrane pass occupies residues 214-233 (GVAPLWMRQIPYTMMKFACF). Residues 234 to 256 (ERTVEALYKFVVPKPRSECTKAE) lie on the Mitochondrial intermembrane side of the membrane. Residues 257 to 279 (QLVVTFVAGYIAGVFCAIVSHPA) form a helical membrane-spanning segment. The Mitochondrial matrix portion of the chain corresponds to 280 to 309 (DSVVSVLNKEKGSTASQVLQRLGFRGVWKG). A helical membrane pass occupies residues 310–328 (LFARIIMIGTLTALQWFIY). The Mitochondrial intermembrane portion of the chain corresponds to 329–357 (DSVKVYFRLPRPPPPEMPESLKKKLGLTE).

Belongs to the mitochondrial carrier (TC 2.A.29) family. Interacts with PPIF; the interaction is impaired by CsA.

It is found in the mitochondrion inner membrane. It catalyses the reaction phosphate(in) + H(+)(in) = phosphate(out) + H(+)(out). In terms of biological role, inorganic ion transporter that transports phosphate or copper ions across the mitochondrial inner membrane into the matrix compartment. Mediates proton-coupled symport of phosphate ions necessary for mitochondrial oxidative phosphorylation of ADP to ATP. Transports copper ions probably in the form of anionic copper(I) complexes to maintain mitochondrial matrix copper pool and to supply copper for cytochrome C oxidase complex assembly. May also play a role in regulation of the mitochondrial permeability transition pore (mPTP). The sequence is that of Solute carrier family 25 member 3 from Mus musculus (Mouse).